Reading from the N-terminus, the 874-residue chain is Alanine--tRNA ligase (874 aa).

Positions 563, 567, 665, and 669 each coordinate Zn(2+).

This sequence belongs to the class-II aminoacyl-tRNA synthetase family. The cofactor is Zn(2+).

The protein resides in the cytoplasm. The enzyme catalyses tRNA(Ala) + L-alanine + ATP = L-alanyl-tRNA(Ala) + AMP + diphosphate. In terms of biological role, catalyzes the attachment of alanine to tRNA(Ala) in a two-step reaction: alanine is first activated by ATP to form Ala-AMP and then transferred to the acceptor end of tRNA(Ala). Also edits incorrectly charged Ser-tRNA(Ala) and Gly-tRNA(Ala) via its editing domain. This Haemophilus ducreyi (strain 35000HP / ATCC 700724) protein is Alanine--tRNA ligase.